Reading from the N-terminus, the 171-residue chain is Adenine phosphoribosyltransferase (171 aa).

This sequence belongs to the purine/pyrimidine phosphoribosyltransferase family. Homodimer.

It localises to the cytoplasm. It catalyses the reaction AMP + diphosphate = 5-phospho-alpha-D-ribose 1-diphosphate + adenine. It functions in the pathway purine metabolism; AMP biosynthesis via salvage pathway; AMP from adenine: step 1/1. In terms of biological role, catalyzes a salvage reaction resulting in the formation of AMP, that is energically less costly than de novo synthesis. In Prochlorococcus marinus (strain MIT 9515), this protein is Adenine phosphoribosyltransferase.